Reading from the N-terminus, the 185-residue chain is uncharacterized protein (185 aa).

A chloroplast-targeting transit peptide spans 1 to 56 (MSSFTIPSPSSFSLSNSYNQTSPHSFTLRNSRSNFEFHRLRLDVESRRRSTSLRSN). The tract at residues 48-67 (RRSTSLRSNCSTKGTDSGEN) is disordered. Positions 52-64 (SLRSNCSTKGTDS) are enriched in polar residues. The stretch at 105-138 (QAEQQKQVQEIQEEVLERAKKAKERAARETMEEQ) forms a coiled coil.

The protein resides in the plastid. The protein localises to the chloroplast. It is found in the plastoglobule. This is an uncharacterized protein from Arabidopsis thaliana (Mouse-ear cress).